A 280-amino-acid chain; its full sequence is 2-dehydro-3-deoxyphosphooctonate aldolase 2 (280 aa).

Belongs to the KdsA family.

The protein localises to the cytoplasm. The catalysed reaction is D-arabinose 5-phosphate + phosphoenolpyruvate + H2O = 3-deoxy-alpha-D-manno-2-octulosonate-8-phosphate + phosphate. It functions in the pathway carbohydrate biosynthesis; 3-deoxy-D-manno-octulosonate biosynthesis; 3-deoxy-D-manno-octulosonate from D-ribulose 5-phosphate: step 2/3. It participates in bacterial outer membrane biogenesis; lipopolysaccharide biosynthesis. This chain is 2-dehydro-3-deoxyphosphooctonate aldolase 2 (kdsA2), found in Pseudomonas putida (strain ATCC 47054 / DSM 6125 / CFBP 8728 / NCIMB 11950 / KT2440).